The chain runs to 519 residues: Exodeoxyribonuclease 7 large subunit (519 aa).

The interval 493–519 (AISTGKSSNTNRKSAPAREPGKQGSLF) is disordered. The span at 496–505 (TGKSSNTNRK) shows a compositional bias: polar residues.

This sequence belongs to the XseA family. As to quaternary structure, heterooligomer composed of large and small subunits.

The protein resides in the cytoplasm. It catalyses the reaction Exonucleolytic cleavage in either 5'- to 3'- or 3'- to 5'-direction to yield nucleoside 5'-phosphates.. Functionally, bidirectionally degrades single-stranded DNA into large acid-insoluble oligonucleotides, which are then degraded further into small acid-soluble oligonucleotides. This chain is Exodeoxyribonuclease 7 large subunit, found in Chelativorans sp. (strain BNC1).